The following is an 860-amino-acid chain: uncharacterized protein (860 aa).

Basic and acidic residues-rich tracts occupy residues 334 to 345 and 536 to 551; these read LEKKSLQSDSKN and EDQKVDSDKDGKLSDK. Disordered stretches follow at residues 334-360, 530-551, 708-798, and 813-842; these read LEKKSLQSDSKNKKSQKRKKDEDLRKE, EEDDVSEDQKVDSDKDGKLSDK, ARKT…EDEF, and PFNETDDEEEIQTVDHSETHSHKKKKRKAI. 3 stretches are compositionally biased toward acidic residues: residues 716–725, 738–750, and 813–824; these read DEEGEIDEDE, EMDEEESDFDSEE, and PFNETDDEEEIQ. 2 positions are modified to phosphoserine: Ser744 and Ser748.

The protein belongs to the CBF/MAK21 family.

This is an uncharacterized protein from Schizosaccharomyces pombe (strain 972 / ATCC 24843) (Fission yeast).